We begin with the raw amino-acid sequence, 369 residues long: Serine proteinase inhibitor 1 (369 aa).

This sequence belongs to the serpin family. Poxviruses subfamily.

Its function is as follows. Important in virulence. In Oryctolagus cuniculus (Rabbit), this protein is Serine proteinase inhibitor 1 (SPI-1).